A 321-amino-acid polypeptide reads, in one-letter code: Biotin synthase (321 aa).

In terms of domain architecture, Radical SAM core spans 45 to 271 (FFGKKVKLNM…INPSKEIRIA (227 aa)). [4Fe-4S] cluster contacts are provided by C63, C67, and C70. [2Fe-2S] cluster is bound by residues C106, C139, C199, and R269.

This sequence belongs to the radical SAM superfamily. Biotin synthase family. In terms of assembly, homodimer. [4Fe-4S] cluster serves as cofactor. Requires [2Fe-2S] cluster as cofactor.

It carries out the reaction (4R,5S)-dethiobiotin + (sulfur carrier)-SH + 2 reduced [2Fe-2S]-[ferredoxin] + 2 S-adenosyl-L-methionine = (sulfur carrier)-H + biotin + 2 5'-deoxyadenosine + 2 L-methionine + 2 oxidized [2Fe-2S]-[ferredoxin]. Its pathway is cofactor biosynthesis; biotin biosynthesis; biotin from 7,8-diaminononanoate: step 2/2. Its function is as follows. Catalyzes the conversion of dethiobiotin (DTB) to biotin by the insertion of a sulfur atom into dethiobiotin via a radical-based mechanism. This is Biotin synthase from Staphylococcus haemolyticus (strain JCSC1435).